The sequence spans 570 residues: Urease subunit alpha (570 aa).

Positions 131-570 (GGFDSHIHFI…LPLAQRYFMF (440 aa)) constitute a Urease domain. The Ni(2+) site is built by His136, His138, and Lys219. N6-carboxylysine is present on Lys219. His221 contributes to the substrate binding site. Ni(2+) contacts are provided by His248 and His274. The Proton donor role is filled by His322. Asp362 contributes to the Ni(2+) binding site.

It belongs to the metallo-dependent hydrolases superfamily. Urease alpha subunit family. In terms of assembly, heterotrimer of UreA (gamma), UreB (beta) and UreC (alpha) subunits. Three heterotrimers associate to form the active enzyme. The cofactor is Ni cation. In terms of processing, carboxylation allows a single lysine to coordinate two nickel ions.

It localises to the cytoplasm. The catalysed reaction is urea + 2 H2O + H(+) = hydrogencarbonate + 2 NH4(+). The protein operates within nitrogen metabolism; urea degradation; CO(2) and NH(3) from urea (urease route): step 1/1. In Rhodopseudomonas palustris (strain TIE-1), this protein is Urease subunit alpha.